The primary structure comprises 142 residues: Large ribosomal subunit protein uL16 (142 aa).

The protein belongs to the universal ribosomal protein uL16 family. In terms of assembly, part of the 50S ribosomal subunit.

Functionally, binds 23S rRNA and is also seen to make contacts with the A and possibly P site tRNAs. This is Large ribosomal subunit protein uL16 from Fervidobacterium nodosum (strain ATCC 35602 / DSM 5306 / Rt17-B1).